We begin with the raw amino-acid sequence, 283 residues long: Arsenite methyltransferase (283 aa).

The protein belongs to the methyltransferase superfamily. Arsenite methyltransferase family.

It carries out the reaction arsenic triglutathione + [thioredoxin]-dithiol + S-adenosyl-L-methionine + 2 H2O = methylarsonous acid + [thioredoxin]-disulfide + 3 glutathione + S-adenosyl-L-homocysteine + H(+). It catalyses the reaction arsenic triglutathione + 2 [thioredoxin]-dithiol + 2 S-adenosyl-L-methionine + H2O = dimethylarsinous acid + 2 [thioredoxin]-disulfide + 3 glutathione + 2 S-adenosyl-L-homocysteine + 2 H(+). The enzyme catalyses arsenic triglutathione + 3 [thioredoxin]-dithiol + 3 S-adenosyl-L-methionine = trimethylarsine + 3 [thioredoxin]-disulfide + 3 glutathione + 3 S-adenosyl-L-homocysteine + 3 H(+). Its function is as follows. Catalyzes the transfer of a methyl group from AdoMet to arsenite, producing methylated arsenicals. Involved in the conversion of As(III) to a number of di- and trimethylated species, with trimethylarsine as the end product. Reduces the arsenic toxicity in the cell and may contribute to the global arsenic cycling. The sequence is that of Arsenite methyltransferase from Rhodopseudomonas palustris (strain ATCC BAA-98 / CGA009).